The sequence spans 142 residues: MKTFLTEQQIKVLMLRAKGYKQSEIAKILGTSRANVSILEKRAMEKIEKARNTLLLWEQINSKVIVEIKAGEDIFSIPEKFFKKADKVGVKVPYSTAEIITFLVEHAPVEDRLAKRDFVLFLDSKNKLRIGDCLVIEEIKED.

Belongs to the Tfx family.

Functionally, putative transcriptional regulator. This chain is Putative transcriptional regulatory protein PF0535, found in Pyrococcus furiosus (strain ATCC 43587 / DSM 3638 / JCM 8422 / Vc1).